Here is a 131-residue protein sequence, read N- to C-terminus: MIVCAEMDEHWGYVGAKSRQRWLFYAYDRIRRTVVAHVFGERTLATLERLLSLLSAFEVVVWMTDGWPLYESRLKGKLHVISKRYTQRIERHNLNLRQHLARLGRKSLSFSKSVELHDKVIGHYLNIKHYQ.

The protein belongs to the transposase 27 family.

Functionally, absolutely required for transposition of IS1. The protein is Insertion element IS1 protein InsB (insB1) of Shigella flexneri.